Consider the following 520-residue polypeptide: Succinyl-CoA:3-ketoacid coenzyme A transferase 2A, mitochondrial (520 aa).

A mitochondrion-targeting transit peptide spans 1–39 (MAALRLLAWAFSRRVSAHRPQPTLPHHLIRHYPTTRCGK). The disordered stretch occupies residues 280-299 (ERLTTRDSPPAPGSKDQDPK). Residue Glu342 is the 5-glutamyl coenzyme A thioester intermediate of the active site.

The protein belongs to the 3-oxoacid CoA-transferase family. As to quaternary structure, homodimer. In terms of tissue distribution, expressed in flagella of epididymal sperm.

Its subcellular location is the mitochondrion. It carries out the reaction a 3-oxo acid + succinyl-CoA = a 3-oxoacyl-CoA + succinate. It participates in ketone metabolism; succinyl-CoA degradation; acetoacetyl-CoA from succinyl-CoA: step 1/1. Functionally, key enzyme for ketone body catabolism. Transfers the CoA moiety from succinate to acetoacetate. Formation of the enzyme-CoA intermediate proceeds via an unstable anhydride species formed between the carboxylate groups of the enzyme and substrate. Probably play and important roles in the energy metabolism of spermatozoa. This chain is Succinyl-CoA:3-ketoacid coenzyme A transferase 2A, mitochondrial (Oxct2a), found in Rattus norvegicus (Rat).